The following is a 130-amino-acid chain: Small ribosomal subunit protein uS11c (130 aa).

The protein belongs to the universal ribosomal protein uS11 family. In terms of assembly, part of the 30S ribosomal subunit.

The protein localises to the plastid. The protein resides in the chloroplast. This Tetradesmus obliquus (Green alga) protein is Small ribosomal subunit protein uS11c.